The sequence spans 77 residues: Acyl carrier protein (77 aa).

In terms of domain architecture, Carrier spans 2–77 (SAIDKRVKEI…DAIDYITEHT (76 aa)). Serine 37 is modified (O-(pantetheine 4'-phosphoryl)serine).

It belongs to the acyl carrier protein (ACP) family. 4'-phosphopantetheine is transferred from CoA to a specific serine of apo-ACP by AcpS. This modification is essential for activity because fatty acids are bound in thioester linkage to the sulfhydryl of the prosthetic group.

The protein resides in the cytoplasm. The protein operates within lipid metabolism; fatty acid biosynthesis. Functionally, carrier of the growing fatty acid chain in fatty acid biosynthesis. The polypeptide is Acyl carrier protein (Geobacter metallireducens (strain ATCC 53774 / DSM 7210 / GS-15)).